The following is a 378-amino-acid chain: Cln5-like protein 1 (378 aa).

The first 20 residues, 1–20 (MNKIIIFILFLISILQSVRG), serve as a signal peptide directing secretion. 8 N-linked (GlcNAc...) asparagine glycosylation sites follow: Asn-63, Asn-93, Asn-135, Asn-181, Asn-220, Asn-226, Asn-254, and Asn-280. Residues 308–328 (WIFIIILLSFTTVYLVGGILI) form a helical membrane-spanning segment.

The protein belongs to the CLN5 family.

Its subcellular location is the membrane. This chain is Cln5-like protein 1 (cln5la), found in Dictyostelium discoideum (Social amoeba).